The primary structure comprises 876 residues: Bifunctional uridylyltransferase/uridylyl-removing enzyme (876 aa).

The tract at residues 1–332 is uridylyltransferase; sequence MPYQSPITFQ…NNGEEAEAVI (332 aa). The segment at 333–692 is uridylyl-removing; that stretch reads IDDDFQRRGN…LSKKATRGGT (360 aa). Residues 451–573 form the HD domain; it reads VDEHSIRLLK…VRDEERLEYL (123 aa). ACT domains lie at 693-777 and 800-876; these read EVFI…RIPR and LMEF…PSAQ.

Belongs to the GlnD family. Requires Mg(2+) as cofactor.

It carries out the reaction [protein-PII]-L-tyrosine + UTP = [protein-PII]-uridylyl-L-tyrosine + diphosphate. The enzyme catalyses [protein-PII]-uridylyl-L-tyrosine + H2O = [protein-PII]-L-tyrosine + UMP + H(+). Uridylyltransferase (UTase) activity is inhibited by glutamine, while glutamine activates uridylyl-removing (UR) activity. In terms of biological role, modifies, by uridylylation and deuridylylation, the PII regulatory proteins (GlnB and homologs), in response to the nitrogen status of the cell that GlnD senses through the glutamine level. Under low glutamine levels, catalyzes the conversion of the PII proteins and UTP to PII-UMP and PPi, while under higher glutamine levels, GlnD hydrolyzes PII-UMP to PII and UMP (deuridylylation). Thus, controls uridylylation state and activity of the PII proteins, and plays an important role in the regulation of nitrogen assimilation and metabolism. The protein is Bifunctional uridylyltransferase/uridylyl-removing enzyme of Vibrio cholerae serotype O1 (strain ATCC 39315 / El Tor Inaba N16961).